A 153-amino-acid polypeptide reads, in one-letter code: 6,7-dimethyl-8-ribityllumazine synthase (153 aa).

Residues F22, 56–58 (AFE), and 80–82 (TVI) contribute to the 5-amino-6-(D-ribitylamino)uracil site. 85 to 86 (ST) lines the (2S)-2-hydroxy-3-oxobutyl phosphate pocket. The active-site Proton donor is H88. Residue F113 participates in 5-amino-6-(D-ribitylamino)uracil binding. R127 contributes to the (2S)-2-hydroxy-3-oxobutyl phosphate binding site.

This sequence belongs to the DMRL synthase family. Forms an icosahedral capsid composed of 60 subunits, arranged as a dodecamer of pentamers.

It catalyses the reaction (2S)-2-hydroxy-3-oxobutyl phosphate + 5-amino-6-(D-ribitylamino)uracil = 6,7-dimethyl-8-(1-D-ribityl)lumazine + phosphate + 2 H2O + H(+). It functions in the pathway cofactor biosynthesis; riboflavin biosynthesis; riboflavin from 2-hydroxy-3-oxobutyl phosphate and 5-amino-6-(D-ribitylamino)uracil: step 1/2. In terms of biological role, catalyzes the formation of 6,7-dimethyl-8-ribityllumazine by condensation of 5-amino-6-(D-ribitylamino)uracil with 3,4-dihydroxy-2-butanone 4-phosphate. This is the penultimate step in the biosynthesis of riboflavin. In Actinobacillus pleuropneumoniae serotype 5b (strain L20), this protein is 6,7-dimethyl-8-ribityllumazine synthase.